The primary structure comprises 154 residues: D-aminoacyl-tRNA deacylase (154 aa).

Residues G142–P143 carry the Gly-cisPro motif, important for rejection of L-amino acids motif.

It belongs to the DTD family. Homodimer.

It localises to the cytoplasm. It carries out the reaction glycyl-tRNA(Ala) + H2O = tRNA(Ala) + glycine + H(+). The enzyme catalyses a D-aminoacyl-tRNA + H2O = a tRNA + a D-alpha-amino acid + H(+). In terms of biological role, an aminoacyl-tRNA editing enzyme that deacylates mischarged D-aminoacyl-tRNAs. Also deacylates mischarged glycyl-tRNA(Ala), protecting cells against glycine mischarging by AlaRS. Acts via tRNA-based rather than protein-based catalysis; rejects L-amino acids rather than detecting D-amino acids in the active site. By recycling D-aminoacyl-tRNA to D-amino acids and free tRNA molecules, this enzyme counteracts the toxicity associated with the formation of D-aminoacyl-tRNA entities in vivo and helps enforce protein L-homochirality. The polypeptide is D-aminoacyl-tRNA deacylase (Polaromonas sp. (strain JS666 / ATCC BAA-500)).